We begin with the raw amino-acid sequence, 367 residues long: Glutamate 5-kinase (367 aa).

Position 8 (K8) interacts with ATP. Substrate is bound by residues S49, D136, and N148. ATP contacts are provided by residues 168–169 and 210–216; these read TD and TGGMVTK. Residues 275 to 353 enclose the PUA domain; sequence AGKLYLDEGA…REISTILGYA (79 aa).

The protein belongs to the glutamate 5-kinase family.

The protein localises to the cytoplasm. The catalysed reaction is L-glutamate + ATP = L-glutamyl 5-phosphate + ADP. Its pathway is amino-acid biosynthesis; L-proline biosynthesis; L-glutamate 5-semialdehyde from L-glutamate: step 1/2. Its function is as follows. Catalyzes the transfer of a phosphate group to glutamate to form L-glutamate 5-phosphate. This is Glutamate 5-kinase from Nostoc punctiforme (strain ATCC 29133 / PCC 73102).